The primary structure comprises 78 residues: Large ribosomal subunit protein bL28 (78 aa).

The protein belongs to the bacterial ribosomal protein bL28 family.

The protein is Large ribosomal subunit protein bL28 of Pseudoalteromonas atlantica (strain T6c / ATCC BAA-1087).